A 573-amino-acid polypeptide reads, in one-letter code: MAAVPPLRDRLSFLHRLPILLKGTSDDSIPCPGYLFEEIAKISHESLGSSQCLLEYLLNRLDSSSGHVKLKVLKILLYLCGHGSSSFLLILRRNSALIQEATAFSGPPDPLHGNSLYQKVRAAAQDLGSTLFSDAVPQPPSQPPQIPPPAGMGAQARPLSALQGFGYTKESSRTGSAGETFLSTIQRAAEVVANAVRPGPDNPCTKGPLPYGDSYQPAVTPSASHTHPNPGNLLPGAILGARAVRHQPGQAGGGWDELDSSPSSQNSSCTSNLSRASDSGSRSGSDSHSGTSREPGDLAERAEATPPNDCQQELNLVRTVTQGPRVFLSREETQHFIKECGLLNCEAVLELLLRQLVGTSECEQMRALCAIASFGSADLLPQEHVLLLCRQQLQELGAGSPGPVTNKATKILRHFEASCGQQLPTLRLCAQPNSAAAPVGPADLLTSPVPAPGSQVFLQPLSSATVVPRSPVLFPSPNTLPPSALEEPSEVRTQLVCSSEQGTESEQRLENTDTPEDSSSPLPWSPNSLFAGMELVACPRLPCHSSQDLQTDLQKVTTEAPVSEPSAFAFLNM.

The ENTH domain maps to 8-141; that stretch reads RDRLSFLHRL…FSDAVPQPPS (134 aa). 2 disordered regions span residues 136-155 and 194-311; these read VPQPPSQPPQIPPPAGMGAQ and NAVR…NDCQ. The segment covering 137 to 150 has biased composition (pro residues); sequence PQPPSQPPQIPPPA. A compositionally biased stretch (polar residues) spans 217-229; the sequence is PAVTPSASHTHPN. The span at 260 to 293 shows a compositional bias: low complexity; sequence SSPSSQNSSCTSNLSRASDSGSRSGSDSHSGTSR. Positions 294–303 are enriched in basic and acidic residues; the sequence is EPGDLAERAE. Serine 400 carries the post-translational modification Phosphoserine. A disordered region spans residues 497–526; it reads CSSEQGTESEQRLENTDTPEDSSSPLPWSP. Residues 526-536 are interaction with AP4B1; sequence PNSLFAGMELV. The tract at residues 563–573 is interaction with AP4E1; it reads SEPSAFAFLNM.

Interacts with AP4B1 and AP4E1; the interaction is direct and mediates the association of TEPSIN with the adapter-like complex 4 (AP-4), a heterotetramer composed of AP4B1, AP4E1, AP4M1 and AP4S1.

It is found in the golgi apparatus. Its subcellular location is the trans-Golgi network membrane. It localises to the cytoplasmic vesicle. The protein resides in the cytoplasm. The protein localises to the cytosol. In terms of biological role, associates with the adapter-like complex 4 (AP-4) and may therefore play a role in vesicular trafficking of proteins at the trans-Golgi network. This Mus musculus (Mouse) protein is AP-4 complex accessory subunit Tepsin.